A 2208-amino-acid polypeptide reads, in one-letter code: MSAASSSSVLHLRTNQQLLSLRSLKNSTSVASQLAVTSGVSRRRSCTARCSVKKPVIPESPFLGTRVRRSGSETLQFWRSDGPGRSAKLRTVVKSSFSAVPEKPLGLYDPSYDKDSCGVGFVAELSGETTRKTVTDSLEMLIRMTHRGACGCESNTGDGAGILVGLPHDFYAEAATELGFVLPSAGNYAVGMFFLPTVESRREESKNVFTKVAESLGHSVLGWRLVPTDNSGLGNSALQTEPIIAQVFLTPTTKSKADFEQQMYILRRVSMVAIRAALNLQHGAMKDFYICSLSSRTIVYKGQLKPDQLKDYYYADLGSERFTSYMALVHSRFSTNTFPSWDRAQPMRVLGHNGEINTLRGNVNWMRAREGLLKCNELGLSKKELKKLLPIVDVSSSDSGAFDGVLELLVRAGRSLPEAVMMMIPEAWQNDKNIDPSRKEFYEYLSALMEPWDGPALISFTDGRYLGATLDRNGLRPGRFYITHSGRVIMASEVGVVDVPPEDVMRKGRLNPGMMLLVDFEKHIVVDDDALKQQYSLARPYGEWLKRQKIELKDIIESVPEAERIAPSISGVVPASNDDDSMESMGIHGLLSPLKAFGYTVEALEMLLLPMAKDGSEALGSMGNDTPLAVMSNREKLCFEYFKQMFAQVTNPPIDPIREKIVTSMECMIGPEGDLTETTEEQCHRLSLKGPLLKIEEMEAIKKMNYRGWRTKVLDITYAKERGTKGLEETLDRICDEANEAIKEGYTLLVLSDRAFSATRVAVSSLMAVGAVHHHLVKTLARTQVGLVVESAEPREVHHFCTLVGFGADAICPYLAVEAVYRLQVDGKIPPKSNGEFHSKEELVKKYYKASNYGMMKVLAKMGISTLASYKGAQIFEALGLSSEVIQKCFAGTPSRVEGATFEMLARDGLQLHELAFPTRGYAPGSAEASALTNPGNYHWRKNGEIHLNDPLAIAKLQEAARTNSVAAYKEYSKRINELNKQSNLRGLMKFKDADVKIPLDEVEPASEIVKRFCTGAMSYGSISLEAHTTLAMAMNKLGGKSNTGEGGELPSRMEPLADGSRNPKRSSIKQIASGRFGVSSYYLTNADELQIKMAQGAKPGEGGELPGHKVIGDIAITRNSTAGVGLISPPPHHDIYSIEDLAQLIHDLKNANPGARISVKLVSEAGVGVIASGVVKGHADHVLIAGHDGGTGASRWTGIKNAGLPWELGLAETHQTLVANDLRGRTVLQTDGQLKTGRDVAVAALLGAEEFGFSTAPLITLGCIMMRKCHKNTCPVGIATQDPVLREKFAGEPEHVINFFFMLAEEVREIMSGLGFRTVTEMIGRADMLELDREVVKNNDKLENIDLSLLLRPAAEIRPGAAQYCVQKQDHGLDMALDQELIALSKSALEKSLPVYIETPICNVNRAVGTMLSHEVTKRYHLTGLPKDTIHIKFTGSAGQSLGAFLCPGIMLELEGDSNDYVGKGLSGGKVVVYPPKGSSFDPKENIVIGNVALYGATSGEAYFNGMAAERFSVRNSGAKAVVEGLGDHGCEYMTGGTVVVLGKTGRNFAAGMSGGIAYVLDVDGKFNTRCNLELVDLDKVEDEEDKMTLKMMIQQHQRHTNSQLAQEVLADFENLLPKFIKVFPRDYKRVLSAMKHEEVSKQAIERASEEADETEEKELEEKDAFAELKNMAAASSKEEMSGNGVAAEARPSKVDNAVKNGGFIAYEREGVKYRDPNVRLNDWNEVMEESKPGPLLTTQSARCMDCGTPFCHQENSGCPLGNKIPEFNELVYQNRWQEALNRLLETNNFPEFTGRVCPAPCEGSCVLGIIENPVSIKSIECAIIDKAFEEGWMVPRPPLKRTGKKVAIIGSGPAGLAAADQLNKMGHLVTVYERSDRIGGLMMYGVPNMKTDKIDVVQRRVDLMTKEGINFVVNANIGKDPSYSLDGLKEENDAIVLAVGSTKPRDLPVPGRDLSGVHFAMEFLHANTKSLLDSNHEDGNYISAKGKKVVVIGGGDTGTDCIGTSIRHGCTNIVNLELLPQPPSTRAPGNPWPQWPRVFRIDYGHQEATTKFGKDPRTYEVLTKRFIGDDNGNVKGLELVRVSWEKDETGRFQFKEIEGSEEIIEADLVFLAMGFLGPEPTLAEKLGLECDNRSNFKAEYGRFSTTVEGVFAAGDCRRGQSLVVWAISEGRQAADQVDKFLTKTDDDEDAKLQQDLNQMKHNTITN.

Residues 1–49 constitute a chloroplast transit peptide; sequence MSAASSSSVLHLRTNQQLLSLRSLKNSTSVASQLAVTSGVSRRRSCTAR. Catalysis depends on Cys117, which acts as the Nucleophile. The region spanning 117–521 is the Glutamine amidotransferase type-2 domain; sequence CGVGFVAELS…PGMMLLVDFE (405 aa). The segment at 1040–1067 is disordered; that stretch reads GKSNTGEGGELPSRMEPLADGSRNPKRS. FMN is bound at residue 1211-1268; that stretch reads LAETHQTLVANDLRGRTVLQTDGQLKTGRDVAVAALLGAEEFGFSTAPLITLGCIMMR. [3Fe-4S] cluster is bound by residues Cys1264, Cys1270, and Cys1275. Residue 1995–2009 coordinates NAD(+); the sequence is GGGDTGTDCIGTSIR.

It belongs to the glutamate synthase family. Monomer. Requires [3Fe-4S] cluster as cofactor. The cofactor is FAD. FMN is required as a cofactor. As to expression, highly expressed in roots and at low levels in leaves.

The protein localises to the plastid. Its subcellular location is the chloroplast. It catalyses the reaction 2 L-glutamate + NAD(+) = L-glutamine + 2-oxoglutarate + NADH + H(+). The protein operates within amino-acid biosynthesis; L-glutamate biosynthesis via GLT pathway; L-glutamate from 2-oxoglutarate and L-glutamine (NAD(+) route): step 1/1. It participates in energy metabolism; nitrogen metabolism. Functionally, involved in glutamate biosynthesis. Required for non-photorespiratory ammonium assimilation. Probably involved in primary ammonium assimilation in roots. In Arabidopsis thaliana (Mouse-ear cress), this protein is Glutamate synthase 1 [NADH], chloroplastic (GLT1).